Here is a 440-residue protein sequence, read N- to C-terminus: Histidinol dehydrogenase (440 aa).

Tyrosine 139, glutamine 200, and asparagine 223 together coordinate NAD(+). Residues serine 246, glutamine 268, and histidine 271 each coordinate substrate. Zn(2+)-binding residues include glutamine 268 and histidine 271. Active-site proton acceptor residues include glutamate 336 and histidine 337. Substrate is bound by residues histidine 337, aspartate 370, glutamate 424, and histidine 429. A Zn(2+)-binding site is contributed by aspartate 370. Histidine 429 is a binding site for Zn(2+).

This sequence belongs to the histidinol dehydrogenase family. It depends on Zn(2+) as a cofactor.

The catalysed reaction is L-histidinol + 2 NAD(+) + H2O = L-histidine + 2 NADH + 3 H(+). Its pathway is amino-acid biosynthesis; L-histidine biosynthesis; L-histidine from 5-phospho-alpha-D-ribose 1-diphosphate: step 9/9. Its function is as follows. Catalyzes the sequential NAD-dependent oxidations of L-histidinol to L-histidinaldehyde and then to L-histidine. This chain is Histidinol dehydrogenase, found in Bordetella bronchiseptica (strain ATCC BAA-588 / NCTC 13252 / RB50) (Alcaligenes bronchisepticus).